We begin with the raw amino-acid sequence, 399 residues long: Glutathione S-transferase LANCL1 (399 aa).

Position 2 is an N-acetylalanine (A2). K142 carries the post-translational modification N6-acetyllysine. C276 is a binding site for Zn(2+). Glutathione is bound at residue K317. Residues C322 and H323 each contribute to the Zn(2+) site. 364 to 367 (RTPD) serves as a coordination point for glutathione.

Belongs to the LanC-like protein family. Interacts with the C-terminal of STOM. Interacts with the EPS8 SH3 domain. Interaction with EPS8 is inhibited by glutathione binding. In terms of tissue distribution, strongly expressed in the brain, testis and skeletal muscle. Expressed in the neurons of the cerebellum, the germinal cells of the seminiferous tubules in testis, in liver hepoatocytes and in cardiac myocytes.

Its subcellular location is the cytoplasm. It is found in the cell membrane. The catalysed reaction is RX + glutathione = an S-substituted glutathione + a halide anion + H(+). It catalyses the reaction 1-chloro-2,4-dinitrobenzene + glutathione = 2,4-dinitrophenyl-S-glutathione + chloride + H(+). Functionally, functions as a glutathione transferase. Catalyzes conjugation of the glutathione (GSH) to artificial substrates 1-chloro-2,4-dinitrobenzene (CDNB) and p-nitrophenyl acetate. Mitigates neuronal oxidative stress during normal postnatal development and in response to oxidative stresses probably through GSH antioxidant defense mechanism. May play a role in EPS8 signaling. Binds glutathione. The polypeptide is Glutathione S-transferase LANCL1 (Rattus norvegicus (Rat)).